The sequence spans 219 residues: RING finger protein nenya (219 aa).

The RING-type zinc finger occupies 6-48 (CNKCFRRRNVEPTLIFHMTQCQHVLCASCLSESSTDKKCPLCK). Residues 161–181 (NQARGLRPRTPSVTTSDNTQS) are disordered.

May interact with itself, with narya and vilya through its RING-type zinc finger.

In terms of biological role, required for the formation of DNA double-strand breaks together with narya and vilya during the meiotic recombination process. Plays a redundant role with narya in chromosome segregation during female meiosis. The sequence is that of RING finger protein nenya from Drosophila melanogaster (Fruit fly).